Consider the following 680-residue polypeptide: E3 ubiquitin-protein ligase brl2 (680 aa).

A coiled-coil region spans residues R44–L72. Residues P206 to Q233 are disordered. Basic and acidic residues predominate over residues K210–S229. 3 coiled-coil regions span residues L261–K288, M353–V399, and D485–T609. The segment at C627–G667 adopts an RING-type zinc-finger fold.

This sequence belongs to the BRE1 family. In terms of assembly, component of the histone H2B ubiquitin ligase complex (HULC) composed of at least brl1, brl2, rhp6 and shf1.

The protein resides in the nucleus. The enzyme catalyses S-ubiquitinyl-[E2 ubiquitin-conjugating enzyme]-L-cysteine + [acceptor protein]-L-lysine = [E2 ubiquitin-conjugating enzyme]-L-cysteine + N(6)-ubiquitinyl-[acceptor protein]-L-lysine.. The protein operates within protein modification; protein ubiquitination. E3 ubiquitin-protein ligase which belongs to the histone H2B ubiquitin ligase complex (HULC) which mediates monoubiquitination of histone H2B to form H2BK123ub1. H2BK123ub1 gives a specific tag for epigenetic transcriptional activation and is also a prerequisite for H3K4me and H3K79me formation. This Schizosaccharomyces pombe (strain 972 / ATCC 24843) (Fission yeast) protein is E3 ubiquitin-protein ligase brl2 (brl2).